Reading from the N-terminus, the 237-residue chain is Probable 2-phosphosulfolactate phosphatase (237 aa).

Belongs to the ComB family. It depends on Mg(2+) as a cofactor.

The catalysed reaction is (2R)-O-phospho-3-sulfolactate + H2O = (2R)-3-sulfolactate + phosphate. In Thermus thermophilus (strain ATCC 27634 / DSM 579 / HB8), this protein is Probable 2-phosphosulfolactate phosphatase.